A 262-amino-acid polypeptide reads, in one-letter code: Probable cutinase 1 (262 aa).

The first 19 residues, 1 to 19, serve as a signal peptide directing secretion; the sequence is MAPLKSLLLGASLATLALS. 2 disulfides stabilise this stretch: Cys-48–Cys-127 and Cys-74–Cys-88. Ser-138 (nucleophile) is an active-site residue. Cysteines 189 and 196 form a disulfide. The active site involves Asp-193. The active-site Proton donor/acceptor is the His-206. Positions 228–262 are disordered; the sequence is SSSTTSSSSDAASSSSAAGTSSSGLSGLSSFFGGL.

This sequence belongs to the cutinase family.

It is found in the secreted. It catalyses the reaction cutin + H2O = cutin monomers.. Catalyzes the hydrolysis of complex carboxylic polyesters found in the cell wall of plants. Degrades cutin, a macromolecule that forms the structure of the plant cuticle. The sequence is that of Probable cutinase 1 from Aspergillus niger (strain ATCC MYA-4892 / CBS 513.88 / FGSC A1513).